A 333-amino-acid chain; its full sequence is Mevalonate kinase (333 aa).

109–119 (PVGAGLGSSAA) is an ATP binding site. The Proton acceptor role is filled by D160.

It belongs to the GHMP kinase family. Mevalonate kinase subfamily. Homodimer. Requires Mg(2+) as cofactor.

The protein localises to the cytoplasm. It catalyses the reaction (R)-mevalonate + ATP = (R)-5-phosphomevalonate + ADP + H(+). It functions in the pathway isoprenoid biosynthesis; isopentenyl diphosphate biosynthesis via mevalonate pathway; isopentenyl diphosphate from (R)-mevalonate: step 1/3. Functionally, catalyzes the phosphorylation of (R)-mevalonate (MVA) to (R)-mevalonate 5-phosphate (MVAP). Functions in the mevalonate (MVA) pathway leading to isopentenyl diphosphate (IPP), a key precursor for the biosynthesis of isoprenoid compounds such as archaeal membrane lipids. The chain is Mevalonate kinase from Thermococcus sibiricus (strain DSM 12597 / MM 739).